Here is a 271-residue protein sequence, read N- to C-terminus: Phosphatidylinositol transfer protein beta isoform (271 aa).

K215 is modified (N6-acetyllysine). S262 bears the Phosphoserine mark.

The protein belongs to the PtdIns transfer protein family. PI transfer class I subfamily. Constitutive phosphorylation of Ser-262 has no effect on phospholipid transfer activity but is required for Golgi targeting.

The protein resides in the golgi apparatus. It localises to the golgi apparatus membrane. Its subcellular location is the endoplasmic reticulum membrane. It catalyses the reaction a 1,2-diacyl-sn-glycero-3-phosphocholine(in) = a 1,2-diacyl-sn-glycero-3-phosphocholine(out). It carries out the reaction a 1,2-diacyl-sn-glycero-3-phospho-(1D-myo-inositol)(in) = a 1,2-diacyl-sn-glycero-3-phospho-(1D-myo-inositol)(out). The enzyme catalyses an N-(acyl)-sphingosylphosphocholine(in) = an N-(acyl)-sphingosylphosphocholine(out). Catalyzes the transfer of phosphatidylinositol, phosphatidylcholine and sphingomyelin between membranes. Required for COPI-mediated retrograde transport from the Golgi to the endoplasmic reticulum; phosphatidylinositol and phosphatidylcholine transfer activity is essential for this function. This is Phosphatidylinositol transfer protein beta isoform (PITPNB) from Bos taurus (Bovine).